The chain runs to 146 residues: Superoxide dismutase [Mn] 2 (146 aa).

Residues H42, D126, and H130 each contribute to the Mn(2+) site.

Belongs to the iron/manganese superoxide dismutase family. It depends on Mn(2+) as a cofactor.

The catalysed reaction is 2 superoxide + 2 H(+) = H2O2 + O2. Functionally, destroys superoxide anion radicals which are normally produced within the cells and which are toxic to biological systems. The protein is Superoxide dismutase [Mn] 2 (sod2) of Haloferax mediterranei (Halobacterium mediterranei).